Consider the following 305-residue polypeptide: Ribosomal protein L11 methyltransferase (305 aa).

Positions 152, 173, 195, and 237 each coordinate S-adenosyl-L-methionine.

Belongs to the methyltransferase superfamily. PrmA family.

The protein resides in the cytoplasm. The catalysed reaction is L-lysyl-[protein] + 3 S-adenosyl-L-methionine = N(6),N(6),N(6)-trimethyl-L-lysyl-[protein] + 3 S-adenosyl-L-homocysteine + 3 H(+). Methylates ribosomal protein L11. The sequence is that of Ribosomal protein L11 methyltransferase from Hamiltonella defensa subsp. Acyrthosiphon pisum (strain 5AT).